The sequence spans 176 residues: 3-hydroxydecanoyl-[acyl-carrier-protein] dehydratase (176 aa).

The active site involves histidine 75.

This sequence belongs to the thioester dehydratase family. FabA subfamily. In terms of assembly, homodimer.

The protein localises to the cytoplasm. It carries out the reaction a (3R)-hydroxyacyl-[ACP] = a (2E)-enoyl-[ACP] + H2O. It catalyses the reaction (3R)-hydroxydecanoyl-[ACP] = (2E)-decenoyl-[ACP] + H2O. The enzyme catalyses (2E)-decenoyl-[ACP] = (3Z)-decenoyl-[ACP]. It functions in the pathway lipid metabolism; fatty acid biosynthesis. Its function is as follows. Necessary for the introduction of cis unsaturation into fatty acids. Catalyzes the dehydration of (3R)-3-hydroxydecanoyl-ACP to E-(2)-decenoyl-ACP and then its isomerization to Z-(3)-decenoyl-ACP. Can catalyze the dehydratase reaction for beta-hydroxyacyl-ACPs with saturated chain lengths up to 16:0, being most active on intermediate chain length. The sequence is that of 3-hydroxydecanoyl-[acyl-carrier-protein] dehydratase from Glaesserella parasuis serovar 5 (strain SH0165) (Haemophilus parasuis).